Here is a 784-residue protein sequence, read N- to C-terminus: LPS-assembly protein LptD (784 aa).

The signal sequence occupies residues 1–24 (MKKRIPTLLATMIATALYSQQGLA). 2 cysteine pairs are disulfide-bonded: Cys31–Cys724 and Cys173–Cys725.

Belongs to the LptD family. In terms of assembly, component of the lipopolysaccharide transport and assembly complex. Interacts with LptE and LptA. Post-translationally, contains two intramolecular disulfide bonds.

It is found in the cell outer membrane. Together with LptE, is involved in the assembly of lipopolysaccharide (LPS) at the surface of the outer membrane. This is LPS-assembly protein LptD from Shigella dysenteriae serotype 1 (strain Sd197).